The chain runs to 136 residues: NADPH-dependent 7-cyano-7-deazaguanine reductase (136 aa).

C50 (thioimide intermediate) is an active-site residue. Residue D57 is the Proton donor of the active site. Substrate-binding positions include 72–74 (YEL) and 91–92 (HE).

The protein belongs to the GTP cyclohydrolase I family. QueF type 1 subfamily.

It is found in the cytoplasm. It carries out the reaction 7-aminomethyl-7-carbaguanine + 2 NADP(+) = 7-cyano-7-deazaguanine + 2 NADPH + 3 H(+). It participates in tRNA modification; tRNA-queuosine biosynthesis. Its function is as follows. Catalyzes the NADPH-dependent reduction of 7-cyano-7-deazaguanine (preQ0) to 7-aminomethyl-7-deazaguanine (preQ1). This is NADPH-dependent 7-cyano-7-deazaguanine reductase from Prochlorococcus marinus (strain MIT 9515).